A 381-amino-acid chain; its full sequence is Alkanesulfonate monooxygenase (381 aa).

The protein belongs to the SsuD family. Homotetramer.

The enzyme catalyses an alkanesulfonate + FMNH2 + O2 = an aldehyde + FMN + sulfite + H2O + 2 H(+). Functionally, catalyzes the desulfonation of aliphatic sulfonates. This Shigella flexneri serotype 5b (strain 8401) protein is Alkanesulfonate monooxygenase.